We begin with the raw amino-acid sequence, 349 residues long: MGCNSSSLNKLQVPEVRASRSNTPASQKSSDQSYSHIRLLLLGSAESGKTTVLEQVRLLYKQHFTESEYFHRRAFIYHNIFKCIKSLCRAMKMSDIGFADPINMGRSQSIIADEENHYGIFSKELAEKIKCIWADKSMQSLYARRSQFNLNDSAAYFLNNLDKINTLDYKPSDRDLIMAYVPTCGVQNVIFTASNQSFQLFDIGGQKIDRRKWATQYEGIDAIFFCLAISEYDQKMNEDMVTNRLDDALKLLETISEEPMFATTPIYLFLNEIDVFCEKLDVIPLSNYRKDFPGGDQDDALDFMENLAVAALGKRDKSLYRVYRCIAIDTQMMAELLSTVFKDIMKRKR.

Residue G2 is the site of N-myristoyl glycine attachment. C3 is lipidated: S-palmitoyl cysteine. The G-alpha domain occupies 35–349 (SHIRLLLLGS…VFKDIMKRKR (315 aa)). The segment at 38 to 51 (RLLLLGSAESGKTT) is G1 motif. GTP-binding positions include 43 to 50 (GSAESGKT), 177 to 183 (IMAYVPT), 202 to 206 (DIGGQ), 271 to 274 (NEID), and A327. Positions 175-183 (DLIMAYVPT) are G2 motif. Residue T183 participates in Mg(2+) binding. Residues 198 to 207 (FQLFDIGGQK) form a G3 motif region. The interval 267–274 (YLFLNEID) is G4 motif. Positions 325–330 (CIAIDT) are G5 motif.

The protein belongs to the G-alpha family. As to quaternary structure, g proteins are composed of 3 units; alpha, beta and gamma. The alpha chain contains the guanine nucleotide binding site.

In terms of biological role, guanine nucleotide-binding proteins (G proteins) are involved as modulators or transducers in various transmembrane signaling systems. This is Guanine nucleotide-binding protein alpha-13 subunit from Caenorhabditis briggsae.